Here is a 354-residue protein sequence, read N- to C-terminus: 3-dehydroquinate synthase (354 aa).

NAD(+) contacts are provided by residues 61 to 66, 119 to 120, Lys132, Lys141, and 159 to 162; these read DGESTK, TT, and FLET. Zn(2+) is bound by residues Glu174, His238, and His254.

The protein belongs to the sugar phosphate cyclases superfamily. Dehydroquinate synthase family. NAD(+) serves as cofactor. Requires Co(2+) as cofactor. It depends on Zn(2+) as a cofactor.

It localises to the cytoplasm. It catalyses the reaction 7-phospho-2-dehydro-3-deoxy-D-arabino-heptonate = 3-dehydroquinate + phosphate. It functions in the pathway metabolic intermediate biosynthesis; chorismate biosynthesis; chorismate from D-erythrose 4-phosphate and phosphoenolpyruvate: step 2/7. In terms of biological role, catalyzes the conversion of 3-deoxy-D-arabino-heptulosonate 7-phosphate (DAHP) to dehydroquinate (DHQ). This chain is 3-dehydroquinate synthase, found in Saccharolobus solfataricus (strain ATCC 35092 / DSM 1617 / JCM 11322 / P2) (Sulfolobus solfataricus).